Consider the following 511-residue polypeptide: Fas-activated serine/threonine kinase (511 aa).

Residues 439–497 form the RAP domain; the sequence is VVLMLRERWHFCRDGRVLLGSRALRERHLGLMGYQLLPLPFEELESQRGLPQLKSYLRQ.

It belongs to the FAST protein kinase family. In terms of assembly, interacts with TIA1; the interactions leads to TIA1 phosphorylation. Interacts with TIAR. Autophosphorylated on serine/threonine residues. Activated by dephosphorylation.

The protein resides in the mitochondrion matrix. It carries out the reaction L-seryl-[Fas-activated protein] + ATP = O-phospho-L-seryl-[Fas-activated protein] + ADP + H(+). It catalyses the reaction L-threonyl-[Fas-activated protein] + ATP = O-phospho-L-threonyl-[Fas-activated protein] + ADP + H(+). The catalysed reaction is L-seryl-[protein] + ATP = O-phospho-L-seryl-[protein] + ADP + H(+). The enzyme catalyses L-threonyl-[protein] + ATP = O-phospho-L-threonyl-[protein] + ADP + H(+). Functionally, phosphorylates the splicing regulator TIA1, thereby promoting the inclusion of FAS exon 6, which leads to an mRNA encoding a pro-apoptotic form of the receptor. Required for the biogenesis of some mitochondrial-encoded mRNAs, specifically stabilizes ND6 (NADH dehydrogenase complex subunit 6) mRNA, and regulates its levels. In Mus musculus (Mouse), this protein is Fas-activated serine/threonine kinase (Fastk).